The following is a 458-amino-acid chain: Alpha-glucosides-binding periplasmic protein AglE (458 aa).

An N-terminal signal peptide occupies residues Met1 to Ala27.

This sequence belongs to the bacterial solute-binding protein 1 family.

Its subcellular location is the periplasm. Part of the binding-protein-dependent transport system for alpha-glucosides such as sucrose, maltose and trehalose. This Rhizobium meliloti (strain 1021) (Ensifer meliloti) protein is Alpha-glucosides-binding periplasmic protein AglE (aglE).